A 438-amino-acid polypeptide reads, in one-letter code: Adenosylhomocysteinase (438 aa).

Residues Thr61, Asp137, and Glu162 each coordinate substrate. 163-165 is an NAD(+) binding site; it reads TTT. 2 residues coordinate substrate: Lys192 and Asp196. Residues Asn197, 226-231, Glu249, Asn284, 305-307, and Asn352 contribute to the NAD(+) site; these read GYGDVG and IGH.

This sequence belongs to the adenosylhomocysteinase family. Requires NAD(+) as cofactor.

The protein localises to the cytoplasm. It catalyses the reaction S-adenosyl-L-homocysteine + H2O = L-homocysteine + adenosine. It participates in amino-acid biosynthesis; L-homocysteine biosynthesis; L-homocysteine from S-adenosyl-L-homocysteine: step 1/1. Functionally, may play a key role in the regulation of the intracellular concentration of adenosylhomocysteine. This Flavobacterium johnsoniae (strain ATCC 17061 / DSM 2064 / JCM 8514 / BCRC 14874 / CCUG 350202 / NBRC 14942 / NCIMB 11054 / UW101) (Cytophaga johnsonae) protein is Adenosylhomocysteinase.